Reading from the N-terminus, the 118-residue chain is Holo-[acyl-carrier-protein] synthase (118 aa).

Mg(2+) is bound by residues Asp-8 and Glu-58.

The protein belongs to the P-Pant transferase superfamily. AcpS family. The cofactor is Mg(2+).

It localises to the cytoplasm. The catalysed reaction is apo-[ACP] + CoA = holo-[ACP] + adenosine 3',5'-bisphosphate + H(+). Its function is as follows. Transfers the 4'-phosphopantetheine moiety from coenzyme A to a Ser of acyl-carrier-protein. In Streptococcus pyogenes serotype M12 (strain MGAS2096), this protein is Holo-[acyl-carrier-protein] synthase.